Consider the following 215-residue polypeptide: MESSNLYSKLLNAPKNAPVFLSQNLEADFIVKAYTFGLFPWTSKPVTWWCPDPRCILIPNQIHIQKNMKKFINLYQIKLDYDFLKLITLCRDTRSQSWIDDEFITTYYKLFTQGYAHSLELYENNELIGGIYGLILGKVFFGESMVSIKKNASKVAMIKLCDLLKPYDFIIDCQVYNQHLEFMGAHNISRKEFLNILKEKCNQESGFKNFKDLIT.

It belongs to the L/F-transferase family.

It localises to the cytoplasm. The catalysed reaction is N-terminal L-lysyl-[protein] + L-leucyl-tRNA(Leu) = N-terminal L-leucyl-L-lysyl-[protein] + tRNA(Leu) + H(+). It catalyses the reaction N-terminal L-arginyl-[protein] + L-leucyl-tRNA(Leu) = N-terminal L-leucyl-L-arginyl-[protein] + tRNA(Leu) + H(+). It carries out the reaction L-phenylalanyl-tRNA(Phe) + an N-terminal L-alpha-aminoacyl-[protein] = an N-terminal L-phenylalanyl-L-alpha-aminoacyl-[protein] + tRNA(Phe). Its function is as follows. Functions in the N-end rule pathway of protein degradation where it conjugates Leu, Phe and, less efficiently, Met from aminoacyl-tRNAs to the N-termini of proteins containing an N-terminal arginine or lysine. In Campylobacter jejuni subsp. jejuni serotype O:6 (strain 81116 / NCTC 11828), this protein is Leucyl/phenylalanyl-tRNA--protein transferase.